The sequence spans 710 residues: Polyribonucleotide nucleotidyltransferase (710 aa).

2 residues coordinate Mg(2+): aspartate 487 and aspartate 493. The region spanning 554–613 (PRIHTMKISAEKIKDVIGKGGAVIRALTEETGTTIEIEDDGTIKIAATEGAAAKEAIRRI) is the KH domain. The region spanning 623 to 691 (GRIYTGKVAR…RQGRVRLSMK (69 aa)) is the S1 motif domain. Positions 691-710 (KEAVEKPAEEANDASEAKGE) are disordered.

This sequence belongs to the polyribonucleotide nucleotidyltransferase family. As to quaternary structure, component of the RNA degradosome, which is a multiprotein complex involved in RNA processing and mRNA degradation. The cofactor is Mg(2+).

The protein resides in the cytoplasm. It catalyses the reaction RNA(n+1) + phosphate = RNA(n) + a ribonucleoside 5'-diphosphate. In terms of biological role, involved in mRNA degradation. Catalyzes the phosphorolysis of single-stranded polyribonucleotides processively in the 3'- to 5'-direction. The polypeptide is Polyribonucleotide nucleotidyltransferase (Vibrio campbellii (strain ATCC BAA-1116)).